A 192-amino-acid polypeptide reads, in one-letter code: Cobalt-precorrin-6B C(15)-methyltransferase (decarboxylating) (192 aa).

Residues T15, 39 to 43 (GAGTG), E62, and A90 contribute to the S-adenosyl-L-methionine site.

Belongs to the methyltransferase superfamily. Bacterial-type CbiT family.

The enzyme catalyses Co-precorrin-6B + S-adenosyl-L-methionine = Co-precorrin-7 + S-adenosyl-L-homocysteine + CO2. The protein operates within cofactor biosynthesis; adenosylcobalamin biosynthesis; cob(II)yrinate a,c-diamide from sirohydrochlorin (anaerobic route): step 8/10. Catalyzes the methylation of C-15 in cobalt-precorrin-6B followed by the decarboxylation of C-12 to form cobalt-precorrin-7. This chain is Cobalt-precorrin-6B C(15)-methyltransferase (decarboxylating) (cbiT), found in Salmonella typhi.